The sequence spans 302 residues: Catechol 1,2-dioxygenase (302 aa).

Tyrosine 164, tyrosine 198, histidine 222, and histidine 224 together coordinate Fe cation.

It belongs to the intradiol ring-cleavage dioxygenase family. Requires Fe(3+) as cofactor.

The catalysed reaction is catechol + O2 = cis,cis-muconate + 2 H(+). The protein operates within aromatic compound metabolism; beta-ketoadipate pathway; 5-oxo-4,5-dihydro-2-furylacetate from catechol: step 1/3. The chain is Catechol 1,2-dioxygenase (pheB) from Pseudomonas sp. (strain EST1001).